The following is a 316-amino-acid chain: Lys-63-specific deubiquitinase BRCC36 (316 aa).

A2 is modified (N-acetylalanine). The 168-residue stretch at 12 to 179 folds into the MPN domain; sequence VHLESDAFLV…YTCFQSIQAQ (168 aa). Residues H122, H124, and D135 each coordinate Zn(2+). Residues 122-135 carry the JAMM motif motif; the sequence is HSHPHITVWPSHVD. S258 is modified (phosphoserine).

The protein belongs to the peptidase M67A family. BRCC36 subfamily. In terms of assembly, component of the ARISC complex, at least composed of UIMC1/RAP80, ABRAXAS1, BRCC3/BRCC36, BABAM2 and BABAM1/NBA1. Component of the BRCA1-A complex, at least composed of BRCA1, BARD1, UIMC1/RAP80, ABRAXAS1, BRCC3/BRCC36, BABAM2 and BABAM1/NBA1. In the BRCA1-A complex, interacts directly with ABRAXAS1 and BABAM2. Component of the BRISC complex, at least composed of ABRAXAS2, BRCC3/BRCC36, BABAM2 and BABAM1/NBA1. Identified in a complex with SHMT2 and the other subunits of the BRISC complex. In the BRISC complex, interacts directly with ABRAXAS2. Identified in a complex with ABRAXAS2 and NUMA1. The BRISC complex interacts with the CSN complex. Component of the BRCA1/BRCA2 containing complex (BRCC), which also contains BRCA1, BRCA2, BARD1, BABAM2 and RAD51. BRCC is a ubiquitin E3 ligase complex that enhances cellular survival following DNA damage. Interacts with BRCA1. Binds polyubiquitin. Interacts with PWWP2B. Interacts with HDAC1; this interaction is enhanced in the presence of PWWP2B. It depends on Zn(2+) as a cofactor.

The protein localises to the nucleus. Its subcellular location is the cytoplasm. The protein resides in the cytoskeleton. It is found in the spindle pole. In terms of biological role, metalloprotease that specifically cleaves 'Lys-63'-linked polyubiquitin chains. Does not have activity toward 'Lys-48'-linked polyubiquitin chains. Component of the BRCA1-A complex, a complex that specifically recognizes 'Lys-63'-linked ubiquitinated histones H2A and H2AX at DNA lesions sites, leading to target the BRCA1-BARD1 heterodimer to sites of DNA damage at double-strand breaks (DSBs). In the BRCA1-A complex, it specifically removes 'Lys-63'-linked ubiquitin on histones H2A and H2AX, antagonizing the RNF8-dependent ubiquitination at double-strand breaks (DSBs). Catalytic subunit of the BRISC complex, a multiprotein complex that specifically cleaves 'Lys-63'-linked ubiquitin in various substrates. Mediates the specific 'Lys-63'-specific deubiquitination associated with the COP9 signalosome complex (CSN), via the interaction of the BRISC complex with the CSN complex. The BRISC complex is required for normal mitotic spindle assembly and microtubule attachment to kinetochores via its role in deubiquitinating NUMA1. Plays a role in interferon signaling via its role in the deubiquitination of the interferon receptor IFNAR1; deubiquitination increases IFNAR1 activity by enhancing its stability and cell surface expression. Acts as a regulator of the NLRP3 inflammasome by mediating deubiquitination of NLRP3, leading to NLRP3 inflammasome assembly. Down-regulates the response to bacterial lipopolysaccharide (LPS) via its role in IFNAR1 deubiquitination. Deubiquitinates HDAC1 and PWWP2B leading to their stabilization. The sequence is that of Lys-63-specific deubiquitinase BRCC36 (BRCC3) from Bos taurus (Bovine).